Here is a 577-residue protein sequence, read N- to C-terminus: Protein NRT1/ PTR FAMILY 6.2 (577 aa).

The next 12 helical transmembrane spans lie at 28 to 48, 74 to 94, 96 to 116, 134 to 154, 183 to 203, 214 to 234, 332 to 352, 369 to 389, 409 to 429, 447 to 467, 488 to 508, and 535 to 555; these read WITA…TMGI, FMGT…SFLG, FKTI…LAVA, IPAT…IALG, FFFN…VTVL, WAYG…LCGT, LLPI…MITF, IPAG…LAVY, LQRI…AALV, ISVF…AFIY, GLFL…VSIV, and WLLV…ALWF.

The protein belongs to the major facilitator superfamily. Proton-dependent oligopeptide transporter (POT/PTR) (TC 2.A.17) family. Expressed in shoots, leaves, flowers and siliques. Expressed in leaf petiole.

It is found in the membrane. Functionally, low-affinity proton-dependent nitrate transporter. Not involved in dipeptides transport. The sequence is that of Protein NRT1/ PTR FAMILY 6.2 (NPF6.2) from Arabidopsis thaliana (Mouse-ear cress).